Consider the following 496-residue polypeptide: Palmitoleoyl-protein carboxylesterase NOTUM (496 aa).

The signal sequence occupies residues 1–19 (MGRGVRVLLLLSLLHCAGG). The segment at 21-46 (EGRKTWRRRGQQPPPPPRTEAAPAAG) is disordered. Phosphoserine; by FAM20C is present on Ser-81. N-linked (GlcNAc...) asparagine glycosylation occurs at Asn-96. Residues Ser-232, Asp-340, and His-389 each act as charge relay system in the active site.

This sequence belongs to the pectinacetylesterase family. Notum subfamily. As to expression, rarely expressed in adult normal tissues.

It is found in the secreted. It catalyses the reaction [Wnt protein]-O-(9Z)-hexadecenoyl-L-serine + H2O = [Wnt protein]-L-serine + (9Z)-hexadecenoate + H(+). In terms of biological role, carboxylesterase that acts as a key negative regulator of the Wnt signaling pathway by specifically mediating depalmitoleoylation of WNT proteins. Serine palmitoleoylation of WNT proteins is required for efficient binding to frizzled receptors. This is Palmitoleoyl-protein carboxylesterase NOTUM from Homo sapiens (Human).